The chain runs to 107 residues: uncharacterized protein (107 aa).

4 helical membrane passes run 9 to 28, 33 to 50, 55 to 72, and 77 to 99; these read FLVFISFFIILLGILDLIME, SYIIILVGLASLFASLNI, LAIAVCIAAAVFIEAIHV, and YRVILYAIGSLPLIISVGSYLKG.

It is found in the cell membrane. This is an uncharacterized protein from Archaeoglobus fulgidus (strain ATCC 49558 / DSM 4304 / JCM 9628 / NBRC 100126 / VC-16).